The chain runs to 474 residues: 3-isopropylmalate dehydratase large subunit (474 aa).

Positions 350, 415, and 418 each coordinate [4Fe-4S] cluster.

This sequence belongs to the aconitase/IPM isomerase family. LeuC type 1 subfamily. Heterodimer of LeuC and LeuD. [4Fe-4S] cluster is required as a cofactor.

It carries out the reaction (2R,3S)-3-isopropylmalate = (2S)-2-isopropylmalate. It participates in amino-acid biosynthesis; L-leucine biosynthesis; L-leucine from 3-methyl-2-oxobutanoate: step 2/4. In terms of biological role, catalyzes the isomerization between 2-isopropylmalate and 3-isopropylmalate, via the formation of 2-isopropylmaleate. The protein is 3-isopropylmalate dehydratase large subunit of Phenylobacterium zucineum (strain HLK1).